The primary structure comprises 138 residues: Odorant-binding protein 22 (138 aa).

The first 16 residues, 1–16 (MKVFIAVFALIAVAAA), serve as a signal peptide directing secretion. R30 contributes to the (5Z,8Z,11Z,14Z)-eicosatetraenoate binding site. (9Z)-hexadecenoate is bound by residues R30 and Y61. R30 and Y61 together coordinate (9Z,12Z)-octadecadienoate. Disulfide bonds link C33–C64, C60–C113, and C103–C122. N127 carries an N-linked (GlcNAc...) asparagine glycan.

The protein belongs to the PBP/GOBP family. As to quaternary structure, monomer in solution. In terms of tissue distribution, high-level expression in female mouth parts, particularly in the proboscis (at protein level). Moderate-level expression in female antenna (at protein level). Expressed in testis but not in the accessory gland or ejaculatory duct (at protein level). Expressed in spermathecae (at protein level). Female salivary gland. Female chemosensory organs: antenna, palp and proboscis. Not detected in midgut.

It is found in the secreted. Its function is as follows. Involved in modulation of blood-feeding behavior and capacity in female mosquitoes. Required for normal oviposition. Required for normal fecundity and fertility of female and male mosquitoes. Required for normal expression of VGA1 gene, which encodes the egg yolk protein vitellogenin-A1. Involved in regulation of spermatozoa development. Required for normal female longevity when mosquitoes are maintained on regular sugar meal. Binds long chain fatty acids. (Microbial infection) Facilitates shedding of dengue virus type 2 particles into mosquito saliva. Does not affect dengue virus type 2 replication or infection prevalence in midgut and salivary glands at 14 days after blood feeding. In terms of biological role, (Microbial infection) Facilitates shedding of Zika virus particles into mosquito saliva. Does not affect Zika virus replication or infection prevalence in midgut and salivary glands at 14 days after blood feeding. The sequence is that of Odorant-binding protein 22 from Aedes aegypti (Yellowfever mosquito).